The chain runs to 140 residues: Nucleoside diphosphate kinase (140 aa).

ATP contacts are provided by Lys11, Phe59, Arg87, Thr93, Arg104, and Asn114. The Pros-phosphohistidine intermediate role is filled by His117.

The protein belongs to the NDK family. Mg(2+) is required as a cofactor.

It is found in the cytoplasm. It carries out the reaction a 2'-deoxyribonucleoside 5'-diphosphate + ATP = a 2'-deoxyribonucleoside 5'-triphosphate + ADP. The catalysed reaction is a ribonucleoside 5'-diphosphate + ATP = a ribonucleoside 5'-triphosphate + ADP. Major role in the synthesis of nucleoside triphosphates other than ATP. The ATP gamma phosphate is transferred to the NDP beta phosphate via a ping-pong mechanism, using a phosphorylated active-site intermediate. The polypeptide is Nucleoside diphosphate kinase (Metallosphaera sedula (strain ATCC 51363 / DSM 5348 / JCM 9185 / NBRC 15509 / TH2)).